The sequence spans 187 residues: Elongation factor P (187 aa).

Belongs to the elongation factor P family.

Its subcellular location is the cytoplasm. It functions in the pathway protein biosynthesis; polypeptide chain elongation. Functionally, involved in peptide bond synthesis. Stimulates efficient translation and peptide-bond synthesis on native or reconstituted 70S ribosomes in vitro. Probably functions indirectly by altering the affinity of the ribosome for aminoacyl-tRNA, thus increasing their reactivity as acceptors for peptidyl transferase. The sequence is that of Elongation factor P from Corynebacterium jeikeium (strain K411).